The primary structure comprises 837 residues: Histone acetyltransferase KAT2A (837 aa).

A disordered region spans residues 1 to 99 (MAEPSQAPTP…RKAQVRGLPR (99 aa)). A2 is subject to N-acetylalanine. The segment covering 7–51 (APTPAPAAQPRPLQSPAPAPTPTPAPSPASAPIPTPTPAPAPAPA) has biased composition (pro residues). The segment covering 58–74 (TGTGGPGVGSGGAGSGG) has biased composition (gly residues). Residues 75 to 87 (DPARPGLSQQQRA) are compositionally biased toward low complexity. Residues 88-99 (SQRKAQVRGLPR) are compositionally biased toward basic residues. Position 307 is a phosphoserine (S307). Residues 407 to 434 (FSPSMGGGSNSSLSLDSAGAEPMPGEKR) form a disordered region. Residues 416-425 (NSSLSLDSAG) are compositionally biased toward low complexity. Residues 503 to 656 (VIGNSLTPKA…GATLMECELN (154 aa)) form the N-acetyltransferase domain. At K549 the chain carries N6-acetyllysine. E575 acts as the Proton donor/acceptor in catalysis. Acetyl-CoA is bound by residues 579–581 (CAV), 586–592 (QVKGYGT), and Y617. Succinyl-CoA contacts are provided by residues 579–581 (CAV), 586–592 (QVKGYGT), and Y617. Positions 639-648 (LGYIKDYEGA) are loop 3. A Glycyl lysine isopeptide (Lys-Gly) (interchain with G-Cter in SUMO2) cross-link involves residue K728. Residues 728 to 832 (KDPDQLYTTL…KFFYFKLKEG (105 aa)) enclose the Bromo domain. T735 is subject to Phosphothreonine. Residues K759 and K791 each participate in a glycyl lysine isopeptide (Lys-Gly) (interchain with G-Cter in SUMO2) cross-link.

This sequence belongs to the acetyltransferase family. GCN5 subfamily. In terms of assembly, homooligomer; may form a tetramer of homodimers. Interacts with EP300, CREBBP and ADA2. Component of the TFTC-HAT complex, at least composed of TAF5L, TAF6L, TAF3, TADA3L, SUPT3H/SPT3, TAF2/TAFII150, TAF4/TAFII135, TAF5/TAFII100, KAT2A/GCN5L2, TAF10 and TRRAP. Component of the STAGA transcription coactivator-HAT complex, at least composed of SUPT3H, KAT2A, SUPT7L, TAF5L, TAF6L, TADA3L, TAD1L, TAF10, TAF12, TRRAP and TAF9. The STAGA core complex is associated with a subcomplex required for histone deubiquitination composed of ATXN7L3, ENY2 and USP22. Component of the ADA2A-containing complex (ATAC), composed of KAT14, KAT2A, TADA2L, TADA3L, ZZ3, MBIP, WDR5, YEATS2, CCDC101 and DR1. In the complex, it probably interacts directly with KAT14, MBIP and WDR5. Interacts with PML. Interacts with CEBPB. Interacts with TACC1, TACC2 and TACC3. Interacts with RELA. Interacts with NFATC2. Interacts with TBX5. Interacts with PLK4. Associates with the 2-oxoglutarate dehydrogenase complex. Interacts with XPC; leading to KAT2A recruitment to promoters and subsequent acetylation of histones. Interacts with ERCC3/XPB; leading to KAT2A recruitment to promoters and subsequent acetylation of histones. Interacts with ISL1. Interactions of ISL1 with MLIP1 or KAT2A may be mutually exclusive. As to quaternary structure, (Microbial infection) Interacts with and acetylates HIV-1 Tat. In terms of processing, acetylated at Lys-549, inhibiting the protein acetyltransferase activity. Deacetylation at Lys-549 by SIRT6 promotes phosphorylation at Ser-307 and Thr-735 and subsequent activation of the protein acetyltransferase activity, leading to acetylation and inactivation of PPARGC1A. In terms of tissue distribution, expressed in all tissues tested.

The protein localises to the nucleus. The protein resides in the chromosome. It localises to the cytoplasm. Its subcellular location is the cytoskeleton. It is found in the microtubule organizing center. The protein localises to the centrosome. It catalyses the reaction L-lysyl-[histone] + acetyl-CoA = N(6)-acetyl-L-lysyl-[histone] + CoA + H(+). It carries out the reaction L-lysyl-[protein] + acetyl-CoA = N(6)-acetyl-L-lysyl-[protein] + CoA + H(+). The enzyme catalyses succinyl-CoA + L-lysyl-[protein] = N(6)-succinyl-L-lysyl-[protein] + CoA + H(+). The catalysed reaction is glutaryl-CoA + L-lysyl-[protein] = N(6)-glutaryl-L-lysyl-[protein] + CoA + H(+). Its function is as follows. Protein lysine acyltransferase that can act as a acetyltransferase, glutaryltransferase, succinyltransferase or malonyltransferase, depending on the context. Acts as a histone lysine succinyltransferase: catalyzes succinylation of histone H3 on 'Lys-79' (H3K79succ), with a maximum frequency around the transcription start sites of genes. Succinylation of histones gives a specific tag for epigenetic transcription activation. Association with the 2-oxoglutarate dehydrogenase complex, which provides succinyl-CoA, is required for histone succinylation. In different complexes, functions either as an acetyltransferase (HAT) or as a succinyltransferase: in the SAGA and ATAC complexes, acts as a histone acetyltransferase. Has significant histone acetyltransferase activity with core histones, but not with nucleosome core particles. Has a a strong preference for acetylation of H3 at 'Lys-9' (H3K9ac). Acetylation of histones gives a specific tag for epigenetic transcription activation. Recruited by the XPC complex at promoters, where it specifically mediates acetylation of histone variant H2A.Z.1/H2A.Z, thereby promoting expression of target genes. Involved in long-term memory consolidation and synaptic plasticity: acts by promoting expression of a hippocampal gene expression network linked to neuroactive receptor signaling. Acts as a positive regulator of T-cell activation: upon TCR stimulation, recruited to the IL2 promoter following interaction with NFATC2 and catalyzes acetylation of histone H3 at 'Lys-9' (H3K9ac), leading to promote IL2 expression. Required for growth and differentiation of craniofacial cartilage and bone by regulating acetylation of histone H3 at 'Lys-9' (H3K9ac). Regulates embryonic stem cell (ESC) pluripotency and differentiation. Also acetylates non-histone proteins, such as CEBPB, MRE11, PPARGC1A, PLK4 and TBX5. Involved in heart and limb development by mediating acetylation of TBX5, acetylation regulating nucleocytoplasmic shuttling of TBX5. Acts as a negative regulator of centrosome amplification by mediating acetylation of PLK4. Acts as a negative regulator of gluconeogenesis by mediating acetylation and subsequent inactivation of PPARGC1A. Also acts as a histone glutaryltransferase: catalyzes glutarylation of histone H4 on 'Lys-91' (H4K91glu), a mark that destabilizes nucleosomes by promoting dissociation of the H2A-H2B dimers from nucleosomes. Functionally, (Microbial infection) In case of HIV-1 infection, it is recruited by the viral protein Tat. Regulates Tat's transactivating activity and may help inducing chromatin remodeling of proviral genes. The protein is Histone acetyltransferase KAT2A of Homo sapiens (Human).